A 445-amino-acid chain; its full sequence is TNF receptor-associated factor family protein DDB_G0290971 (445 aa).

The segment at 23–67 adopts an RING-type; degenerate zinc-finger fold; it reads CPICFDLYYSSSSKKEVFQCRDGHLACKSCWSDSLLNKKECMICR. 2 TRAF-type zinc fingers span residues 133 to 186 and 186 to 242; these read KHQV…QLDA and AHAL…ESID. A coiled-coil region spans residues 269–307; it reads QLELVECKNQIYQINNKYEKLLERVIKLEQLSMDASNKL. The 128-residue stretch at 314–441 folds into the MATH domain; the sequence is KNSIIFATFS…EDKLVIGLRI (128 aa).

The protein belongs to the TNF receptor-associated factor family. A subfamily.

Its subcellular location is the cytoplasm. Its function is as follows. Probable adapter protein and signal transducer that links members of the tumor necrosis factor receptor family to different signaling pathways by association with the receptor cytoplasmic domain and kinases. This is TNF receptor-associated factor family protein DDB_G0290971 from Dictyostelium discoideum (Social amoeba).